The following is a 446-amino-acid chain: 23S rRNA (uracil(1939)-C(5))-methyltransferase RlmD (446 aa).

In terms of domain architecture, TRAM spans 6–64 (KKLPQESITCEIESLSHEGRGVSHKDGKTLFVEGALPGETVTARYVNSRRSYDELAVEE). Positions 77, 83, 86, and 165 each coordinate [4Fe-4S] cluster. S-adenosyl-L-methionine contacts are provided by Q275, F304, N309, E325, D352, and D377. C403 (nucleophile) is an active-site residue.

This sequence belongs to the class I-like SAM-binding methyltransferase superfamily. RNA M5U methyltransferase family. RlmD subfamily.

It carries out the reaction uridine(1939) in 23S rRNA + S-adenosyl-L-methionine = 5-methyluridine(1939) in 23S rRNA + S-adenosyl-L-homocysteine + H(+). Catalyzes the formation of 5-methyl-uridine at position 1939 (m5U1939) in 23S rRNA. The chain is 23S rRNA (uracil(1939)-C(5))-methyltransferase RlmD from Hahella chejuensis (strain KCTC 2396).